Here is a 98-residue protein sequence, read N- to C-terminus: NADH-ubiquinone oxidoreductase chain 4L (98 aa).

The next 3 membrane-spanning stretches (helical) occupy residues M1–I21, T29–T49, and I59–V79.

It belongs to the complex I subunit 4L family. In terms of assembly, core subunit of respiratory chain NADH dehydrogenase (Complex I) which is composed of 45 different subunits.

The protein resides in the mitochondrion inner membrane. It carries out the reaction a ubiquinone + NADH + 5 H(+)(in) = a ubiquinol + NAD(+) + 4 H(+)(out). Functionally, core subunit of the mitochondrial membrane respiratory chain NADH dehydrogenase (Complex I) which catalyzes electron transfer from NADH through the respiratory chain, using ubiquinone as an electron acceptor. Part of the enzyme membrane arm which is embedded in the lipid bilayer and involved in proton translocation. The polypeptide is NADH-ubiquinone oxidoreductase chain 4L (MT-ND4L) (Phascogale tapoatafa (Common wambenger)).